The chain runs to 301 residues: UDP-3-O-acyl-N-acetylglucosamine deacetylase (301 aa).

His-75, His-233, and Asp-237 together coordinate Zn(2+). His-260 (proton donor) is an active-site residue.

The protein belongs to the LpxC family. Zn(2+) is required as a cofactor.

It catalyses the reaction a UDP-3-O-[(3R)-3-hydroxyacyl]-N-acetyl-alpha-D-glucosamine + H2O = a UDP-3-O-[(3R)-3-hydroxyacyl]-alpha-D-glucosamine + acetate. The protein operates within glycolipid biosynthesis; lipid IV(A) biosynthesis; lipid IV(A) from (3R)-3-hydroxytetradecanoyl-[acyl-carrier-protein] and UDP-N-acetyl-alpha-D-glucosamine: step 2/6. In terms of biological role, catalyzes the hydrolysis of UDP-3-O-myristoyl-N-acetylglucosamine to form UDP-3-O-myristoylglucosamine and acetate, the committed step in lipid A biosynthesis. This Aliarcobacter butzleri (strain RM4018) (Arcobacter butzleri) protein is UDP-3-O-acyl-N-acetylglucosamine deacetylase.